A 483-amino-acid chain; its full sequence is Aspartyl/glutamyl-tRNA(Asn/Gln) amidotransferase subunit B (483 aa).

The protein belongs to the GatB/GatE family. GatB subfamily. As to quaternary structure, heterotrimer of A, B and C subunits.

It catalyses the reaction L-glutamyl-tRNA(Gln) + L-glutamine + ATP + H2O = L-glutaminyl-tRNA(Gln) + L-glutamate + ADP + phosphate + H(+). The catalysed reaction is L-aspartyl-tRNA(Asn) + L-glutamine + ATP + H2O = L-asparaginyl-tRNA(Asn) + L-glutamate + ADP + phosphate + 2 H(+). Its function is as follows. Allows the formation of correctly charged Asn-tRNA(Asn) or Gln-tRNA(Gln) through the transamidation of misacylated Asp-tRNA(Asn) or Glu-tRNA(Gln) in organisms which lack either or both of asparaginyl-tRNA or glutaminyl-tRNA synthetases. The reaction takes place in the presence of glutamine and ATP through an activated phospho-Asp-tRNA(Asn) or phospho-Glu-tRNA(Gln). The sequence is that of Aspartyl/glutamyl-tRNA(Asn/Gln) amidotransferase subunit B from Marinobacter nauticus (strain ATCC 700491 / DSM 11845 / VT8) (Marinobacter aquaeolei).